Reading from the N-terminus, the 589-residue chain is TAF5-like RNA polymerase II p300/CBP-associated factor-associated factor 65 kDa subunit 5L (589 aa).

Residues 211 to 221 (ASGSSSRSENN) show a composition bias toward polar residues. The segment at 211 to 230 (ASGSSSRSENNGLEPPDMPS) is disordered. 6 WD repeats span residues 266-305 (NTEQ…LKSE), 340-379 (GHCG…NTVL), 382-421 (GHAY…PLRI), 424-463 (GHLA…SVRL), 466-505 (GHRG…LYKE), and 508-547 (GHTD…CSAP).

Belongs to the WD repeat TAF5 family. As to quaternary structure, the PCAF complex is composed of a number of TBP-associated factors (TAFS), such as TAF5, TAF5L, TAF6, TAF6L, TAF9, TAF10 and TAF12, PCAF, and also PCAF-associated factors (PAFs), such as TADA2L/ADA2, TADA3L/ADA3 and SPT3. Component of the STAGA transcription coactivator-HAT complex, at least composed of SUPT3H, GCN5L2, TAF5L, TAF6L, SUPT7L, TADA3L, TAD1L, TAF10, TAF12, TRRAP and TAF9.

It localises to the nucleus. Its function is as follows. Functions as a component of the PCAF complex. The PCAF complex is capable of efficiently acetylating histones in a nucleosomal context. The PCAF complex could be considered as the human version of the yeast SAGA complex. With TAF6L, acts as an epigenetic regulator essential for somatic reprogramming. Regulates target genes through H3K9ac deposition and MYC recruitment which trigger MYC regulatory network to orchestrate gene expression programs to control embryonic stem cell state. This chain is TAF5-like RNA polymerase II p300/CBP-associated factor-associated factor 65 kDa subunit 5L, found in Homo sapiens (Human).